A 229-amino-acid polypeptide reads, in one-letter code: Protein-L-isoaspartate O-methyltransferase (229 aa).

Residue S78 is part of the active site.

The protein belongs to the methyltransferase superfamily. L-isoaspartyl/D-aspartyl protein methyltransferase family.

The protein resides in the cytoplasm. The enzyme catalyses [protein]-L-isoaspartate + S-adenosyl-L-methionine = [protein]-L-isoaspartate alpha-methyl ester + S-adenosyl-L-homocysteine. Its function is as follows. Catalyzes the methyl esterification of L-isoaspartyl residues in peptides and proteins that result from spontaneous decomposition of normal L-aspartyl and L-asparaginyl residues. It plays a role in the repair and/or degradation of damaged proteins. The chain is Protein-L-isoaspartate O-methyltransferase from Chromohalobacter salexigens (strain ATCC BAA-138 / DSM 3043 / CIP 106854 / NCIMB 13768 / 1H11).